Here is a 296-residue protein sequence, read N- to C-terminus: (+)-neomenthol dehydrogenase (296 aa).

16 to 40 (RGIGFEICRQLASEGIRVVLTSRDE) is a binding site for NADP(+). Residue serine 164 participates in substrate binding. Residue tyrosine 220 is the Proton acceptor of the active site.

It belongs to the short-chain dehydrogenases/reductases (SDR) family. As to quaternary structure, monomer.

The protein resides in the cytoplasm. The enzyme catalyses (+)-neomenthol + NADP(+) = (1R,4S)-menthone + NADPH + H(+). In terms of biological role, aldehyde reductase that catalyzes the reduction of the aldehyde carbonyl groups on saturated and alpha,beta-unsaturated aldehydes with more than 5 carbons. Involved in basal resistance against pathogens. The sequence is that of (+)-neomenthol dehydrogenase (SDR1) from Arabidopsis thaliana (Mouse-ear cress).